Here is a 343-residue protein sequence, read N- to C-terminus: Geranylgeranyl pyrophosphate synthase 1 (343 aa).

Positions 43, 46, and 75 each coordinate isopentenyl diphosphate. Residues Asp82 and Asp86 each contribute to the Mg(2+) site. Residue Arg91 coordinates dimethylallyl diphosphate. Arg92 serves as a coordination point for isopentenyl diphosphate. 3 residues coordinate dimethylallyl diphosphate: Lys169, Thr170, and Gln212. Residue Asp215 coordinates Mg(2+). Positions 219, 229, and 239 each coordinate dimethylallyl diphosphate.

The protein belongs to the FPP/GGPP synthase family. Mg(2+) serves as cofactor.

It carries out the reaction isopentenyl diphosphate + dimethylallyl diphosphate = (2E)-geranyl diphosphate + diphosphate. It catalyses the reaction isopentenyl diphosphate + (2E)-geranyl diphosphate = (2E,6E)-farnesyl diphosphate + diphosphate. The catalysed reaction is isopentenyl diphosphate + (2E,6E)-farnesyl diphosphate = (2E,6E,10E)-geranylgeranyl diphosphate + diphosphate. Its function is as follows. Geranylgeranyl pyrophosphate synthase; part of the gene cluster 4 that mediates the biosynthesis of an isoprenoid secondary metabolite. The protein is Geranylgeranyl pyrophosphate synthase 1 (GGS1) of Zymoseptoria tritici (strain CBS 115943 / IPO323) (Speckled leaf blotch fungus).